A 569-amino-acid polypeptide reads, in one-letter code: Arginine--tRNA ligase (569 aa).

The 'HIGH' region signature appears at Ala-128 to His-138.

The protein belongs to the class-I aminoacyl-tRNA synthetase family. As to quaternary structure, monomer.

Its subcellular location is the cytoplasm. The enzyme catalyses tRNA(Arg) + L-arginine + ATP = L-arginyl-tRNA(Arg) + AMP + diphosphate. This chain is Arginine--tRNA ligase, found in Paracidovorax citrulli (strain AAC00-1) (Acidovorax citrulli).